Consider the following 90-residue polypeptide: DNA-binding protein HU-alpha (90 aa).

Belongs to the bacterial histone-like protein family. As to quaternary structure, heterodimer of an alpha and a beta chain.

Functionally, histone-like DNA-binding protein which is capable of wrapping DNA to stabilize it, and thus to prevent its denaturation under extreme environmental conditions. This chain is DNA-binding protein HU-alpha (hupA), found in Pseudomonas aeruginosa (strain ATCC 15692 / DSM 22644 / CIP 104116 / JCM 14847 / LMG 12228 / 1C / PRS 101 / PAO1).